The chain runs to 230 residues: Ribose-5-phosphate isomerase A (230 aa).

Substrate contacts are provided by residues 31 to 34 (TGST), 88 to 91 (DGSD), and 101 to 104 (KGGG). Glutamate 110 (proton acceptor) is an active-site residue. Residue lysine 128 coordinates substrate.

This sequence belongs to the ribose 5-phosphate isomerase family. Homodimer.

The enzyme catalyses aldehydo-D-ribose 5-phosphate = D-ribulose 5-phosphate. It participates in carbohydrate degradation; pentose phosphate pathway; D-ribose 5-phosphate from D-ribulose 5-phosphate (non-oxidative stage): step 1/1. Its function is as follows. Catalyzes the reversible conversion of ribose-5-phosphate to ribulose 5-phosphate. The sequence is that of Ribose-5-phosphate isomerase A from Lactobacillus acidophilus (strain ATCC 700396 / NCK56 / N2 / NCFM).